Here is a 378-residue protein sequence, read N- to C-terminus: Succinyl-diaminopimelate desuccinylase (378 aa).

His66 is a Zn(2+) binding site. The active site involves Asp68. A Zn(2+)-binding site is contributed by Asp99. The active-site Proton acceptor is Glu133. Zn(2+) contacts are provided by Glu134, Glu162, and His348.

It belongs to the peptidase M20A family. DapE subfamily. As to quaternary structure, homodimer. The cofactor is Zn(2+). It depends on Co(2+) as a cofactor.

It carries out the reaction N-succinyl-(2S,6S)-2,6-diaminopimelate + H2O = (2S,6S)-2,6-diaminopimelate + succinate. It functions in the pathway amino-acid biosynthesis; L-lysine biosynthesis via DAP pathway; LL-2,6-diaminopimelate from (S)-tetrahydrodipicolinate (succinylase route): step 3/3. In terms of biological role, catalyzes the hydrolysis of N-succinyl-L,L-diaminopimelic acid (SDAP), forming succinate and LL-2,6-diaminopimelate (DAP), an intermediate involved in the bacterial biosynthesis of lysine and meso-diaminopimelic acid, an essential component of bacterial cell walls. This chain is Succinyl-diaminopimelate desuccinylase, found in Halorhodospira halophila (strain DSM 244 / SL1) (Ectothiorhodospira halophila (strain DSM 244 / SL1)).